A 351-amino-acid polypeptide reads, in one-letter code: Methionine import ATP-binding protein MetN (351 aa).

An ABC transporter domain is found at 4–249; that stretch reads VQLDHVSVTF…PKAELTQKFV (246 aa). Position 41–48 (41–48) interacts with ATP; sequence GFSGAGKS.

The protein belongs to the ABC transporter superfamily. Methionine importer (TC 3.A.1.24) family. As to quaternary structure, the complex is composed of two ATP-binding proteins (MetN), two transmembrane proteins (MetI) and a solute-binding protein (MetQ).

The protein resides in the cell membrane. The enzyme catalyses L-methionine(out) + ATP + H2O = L-methionine(in) + ADP + phosphate + H(+). The catalysed reaction is D-methionine(out) + ATP + H2O = D-methionine(in) + ADP + phosphate + H(+). Part of the ABC transporter complex MetNIQ involved in methionine import. Responsible for energy coupling to the transport system. In Lactobacillus delbrueckii subsp. bulgaricus (strain ATCC 11842 / DSM 20081 / BCRC 10696 / JCM 1002 / NBRC 13953 / NCIMB 11778 / NCTC 12712 / WDCM 00102 / Lb 14), this protein is Methionine import ATP-binding protein MetN.